The following is a 165-amino-acid chain: MTRVLGIDPGSRVTGYGILDWTGKPVLVAAGCIRTETDDFPERLRRIFEGISRIVEEFRPEEMAVEQVFMHKNADSALKLGQARGAAICAGVAHGLPVHEYAARQVKLALVGKGSADKAQVQHMVCFLLGQAGPLALDASDALGVAFCHLHHRQTLSRMSRMVRR.

Active-site residues include D8, E66, and D138. Mg(2+) is bound by residues D8, E66, and D138.

Belongs to the RuvC family. In terms of assembly, homodimer which binds Holliday junction (HJ) DNA. The HJ becomes 2-fold symmetrical on binding to RuvC with unstacked arms; it has a different conformation from HJ DNA in complex with RuvA. In the full resolvosome a probable DNA-RuvA(4)-RuvB(12)-RuvC(2) complex forms which resolves the HJ. Mg(2+) is required as a cofactor.

It is found in the cytoplasm. It carries out the reaction Endonucleolytic cleavage at a junction such as a reciprocal single-stranded crossover between two homologous DNA duplexes (Holliday junction).. In terms of biological role, the RuvA-RuvB-RuvC complex processes Holliday junction (HJ) DNA during genetic recombination and DNA repair. Endonuclease that resolves HJ intermediates. Cleaves cruciform DNA by making single-stranded nicks across the HJ at symmetrical positions within the homologous arms, yielding a 5'-phosphate and a 3'-hydroxyl group; requires a central core of homology in the junction. The consensus cleavage sequence is 5'-(A/T)TT(C/G)-3'. Cleavage occurs on the 3'-side of the TT dinucleotide at the point of strand exchange. HJ branch migration catalyzed by RuvA-RuvB allows RuvC to scan DNA until it finds its consensus sequence, where it cleaves and resolves the cruciform DNA. The sequence is that of Crossover junction endodeoxyribonuclease RuvC from Methylococcus capsulatus (strain ATCC 33009 / NCIMB 11132 / Bath).